The chain runs to 457 residues: Siroheme synthase (457 aa).

The precorrin-2 dehydrogenase /sirohydrochlorin ferrochelatase stretch occupies residues 1 to 204; it reads MDHLPIFCQL…NDQKAITETT (204 aa). Residues 22–23 and 43–44 each bind NAD(+); these read DV and LA. Ser128 bears the Phosphoserine mark. The tract at residues 216–457 is uroporphyrinogen-III C-methyltransferase; that stretch reads GEVVLVGAGP…RDKLNWFSNH (242 aa). Pro225 is a binding site for S-adenosyl-L-methionine. The active-site Proton acceptor is the Asp248. The Proton donor role is filled by Lys270. Residues 301 to 303, Ile306, 331 to 332, Met382, and Gly411 contribute to the S-adenosyl-L-methionine site; these read GGD and TA.

In the N-terminal section; belongs to the precorrin-2 dehydrogenase / sirohydrochlorin ferrochelatase family. It in the C-terminal section; belongs to the precorrin methyltransferase family.

It carries out the reaction uroporphyrinogen III + 2 S-adenosyl-L-methionine = precorrin-2 + 2 S-adenosyl-L-homocysteine + H(+). It catalyses the reaction precorrin-2 + NAD(+) = sirohydrochlorin + NADH + 2 H(+). The enzyme catalyses siroheme + 2 H(+) = sirohydrochlorin + Fe(2+). It participates in cofactor biosynthesis; adenosylcobalamin biosynthesis; precorrin-2 from uroporphyrinogen III: step 1/1. Its pathway is cofactor biosynthesis; adenosylcobalamin biosynthesis; sirohydrochlorin from precorrin-2: step 1/1. It functions in the pathway porphyrin-containing compound metabolism; siroheme biosynthesis; precorrin-2 from uroporphyrinogen III: step 1/1. The protein operates within porphyrin-containing compound metabolism; siroheme biosynthesis; siroheme from sirohydrochlorin: step 1/1. It participates in porphyrin-containing compound metabolism; siroheme biosynthesis; sirohydrochlorin from precorrin-2: step 1/1. Its function is as follows. Multifunctional enzyme that catalyzes the SAM-dependent methylations of uroporphyrinogen III at position C-2 and C-7 to form precorrin-2 via precorrin-1. Then it catalyzes the NAD-dependent ring dehydrogenation of precorrin-2 to yield sirohydrochlorin. Finally, it catalyzes the ferrochelation of sirohydrochlorin to yield siroheme. The polypeptide is Siroheme synthase (Escherichia coli O81 (strain ED1a)).